A 633-amino-acid polypeptide reads, in one-letter code: Shootin-1 (633 aa).

M1 bears the N-acetylmethionine mark. A phosphoserine mark is found at S3 and S4. The stretch at 7–353 forms a coiled coil; it reads EKQLQLITSL…RVNQSENSVP (347 aa). S101 and S249 each carry phosphoserine; by PAK1. The segment at 343 to 508 is disordered; that stretch reads KRVNQSENSV…LATSESKSMP (166 aa). A compositionally biased stretch (pro residues) spans 352 to 369; that stretch reads VPPPPPPPPPLPPPPPNP. Position 375 is a phosphoserine (S375). A compositionally biased stretch (basic and acidic residues) spans 403–418; it reads TDLKRQAVEEMMDRIK. Residues 456-465 are compositionally biased toward polar residues; it reads LNKSTSSRSL. A Phosphoserine modification is found at S473. T487 is subject to Phosphothreonine. A compositionally biased stretch (polar residues) spans 490 to 505; it reads ADSSSPTGILATSESK. S494 carries the post-translational modification Phosphoserine. T496 is subject to Phosphothreonine. Residues S506 and S515 each carry the phosphoserine modification. The tract at residues 525–633 is disordered; that stretch reads TLEAEFNNPC…KTGETDSSNC (109 aa). A Phosphothreonine modification is found at T537. The segment covering 550 to 559 has biased composition (polar residues); that stretch reads CTNSKVTFQP. The segment covering 590-621 has biased composition (basic and acidic residues); the sequence is PQTKDQAAEKDPTQCKEEERGETQPEFKEDSS.

The protein belongs to the shootin family. Interacts with PFN2. Interacts (via N-terminus) with KIF20B; this interaction is direct and promotes the association of SHTN1 to microtubules in primary neurons. Associates with microtubule. Interacts with L1CAM; this interaction occurs in axonal growth cones. Interacts with actin filament retrograde flow; this interaction is enhanced in a netrin-1- and PAK1-dependent manner and promotes F-actin-substrate coupling and concomitant formation of traction forces at axonal growth cones. Interacts with RUFY3. Phosphorylated on Ser-101 and Ser-249 by PAK1 through a CDC42- and RAC1-dependent signaling pathway, which enhances its association with F-actin retrograde flow in filopodia and lamellipodia of axonal growth cones. Phosphorylation on Ser-101 and Ser-249 is increased by netrin-1. Brain-specific (at protein level). Expressed in hippocampal neurons.

The protein localises to the perikaryon. It is found in the cell projection. The protein resides in the axon. It localises to the growth cone. Its subcellular location is the cytoplasm. The protein localises to the cytoskeleton. It is found in the filopodium. The protein resides in the lamellipodium. Functionally, involved in the generation of internal asymmetric signals required for neuronal polarization and neurite outgrowth. Mediates netrin-1-induced F-actin-substrate coupling or 'clutch engagement' within the axon growth cone through activation of CDC42, RAC1 and PAK1-dependent signaling pathway, thereby converting the F-actin retrograde flow into traction forces, concomitantly with filopodium extension and axon outgrowth. Plays a role in cytoskeletal organization by regulating the subcellular localization of phosphoinositide 3-kinase (PI3K) activity at the axonal growth cone. Also plays a role in regenerative neurite outgrowth. In the developing cortex, cooperates with KIF20B to promote both the transition from the multipolar to the bipolar stage and the radial migration of cortical neurons from the ventricular zone toward the superficial layer of the neocortex. Involved in the accumulation of phosphatidylinositol 3,4,5-trisphosphate (PIP3) in the growth cone of primary hippocampal neurons. The chain is Shootin-1 from Rattus norvegicus (Rat).